The primary structure comprises 248 residues: Probable transcriptional regulatory protein PP_1214 (248 aa).

The interval 1 to 21 is disordered; the sequence is MAGHSKWANIKHRKERQDAKR.

The protein belongs to the TACO1 family.

The protein localises to the cytoplasm. The polypeptide is Probable transcriptional regulatory protein PP_1214 (Pseudomonas putida (strain ATCC 47054 / DSM 6125 / CFBP 8728 / NCIMB 11950 / KT2440)).